The primary structure comprises 512 residues: MEELKGYLEKSQSKQQHFLYPLLFLEYIYALAHDHGLNVNGSIFYEPAEMSGYDNKFSSLLVKRLITRMYQQNFLINSVNDSNQNRFVGHNKNFYSQMISEGFAVIVEIPFSLRLVSSLEEKKEIPKSQNLRSIHSIFPFFEDKLSHLNYVSDILIPYPVHLKILVQILQCWIQDVPSLHLLRFFFHEYHNWNNIITPKKSSYGFSKENPRLFRFLYNSYVVECESILVFLRKQSSYLRSTSSGTFLERTHFYEKIEQQHLVVLCYNDFQKILWLFKDPFMHYVRYQGKSILASKGTHFLMKKWKSYFVNFWQCHFHFWSQPRRIHINQFSKFSFYFLGYLSNVPINPSAVKSQMLENSFLIDTVTKKFETIVPIVPMIGSLSKAKFCNVLGNPISKPVWADLLDSDIIDRFGRICRNLSHYYSGSSKKQSLYRIKYILRLSCARTLARKHKSTVRAFMQRLGSEFLEEFFTEEEKVISLALPRISYPLHKLYRERIWYXDIIRINDLVNHL.

The protein belongs to the intron maturase 2 family. MatK subfamily.

It localises to the plastid. Its subcellular location is the chloroplast. Usually encoded in the trnK tRNA gene intron. Probably assists in splicing its own and other chloroplast group II introns. The sequence is that of Maturase K from Zantedeschia aethiopica (White calla lily).